Consider the following 78-residue polypeptide: Large ribosomal subunit protein bL28 (78 aa).

The protein belongs to the bacterial ribosomal protein bL28 family.

This Prochlorococcus marinus (strain SARG / CCMP1375 / SS120) protein is Large ribosomal subunit protein bL28.